We begin with the raw amino-acid sequence, 281 residues long: NADH--cytochrome b5 reductase 1 (281 aa).

A helical transmembrane segment spans residues 13 to 33; that stretch reads ILLGVFVAFVAVGAGAAYFLT. Residues 34–40 carry the AKR2A-binding sequence (ABS) required for mitochondrion outer membrane targeting motif; sequence SSKKRRV. An FAD-binding FR-type domain is found at 45-149; it reads ENFKEFKLVK…KGPKGRFKYQ (105 aa). Residues 129 to 144 and 155 to 187 contribute to the FAD site; these read REMRVGDHLAVKGPKG and AFGMLAGGSGITPMFQVARAILENPTDKTKVHL. Threonine 166 carries the phosphothreonine modification.

This sequence belongs to the flavoprotein pyridine nucleotide cytochrome reductase family. Monomer. Interacts with AKR2A. It depends on FAD as a cofactor. As to expression, expressed in roots, stems, flowers and siliques. Detected in leaves.

The protein localises to the mitochondrion outer membrane. It catalyses the reaction 2 Fe(III)-[cytochrome b5] + NADH = 2 Fe(II)-[cytochrome b5] + NAD(+) + H(+). Functionally, reductase transferring electrons from NADH to cytochrome b5. Required for the NADH-dependent electron transfer involved in the desaturation and hydroxylation of fatty acids and in the desaturation of sterol precursors. No activity with NADPH as electron donor. The polypeptide is NADH--cytochrome b5 reductase 1 (Arabidopsis thaliana (Mouse-ear cress)).